A 242-amino-acid chain; its full sequence is Lysosomal membrane ascorbate-dependent ferrireductase CYB561A3 (242 aa).

Residues 1–4 are Cytoplasmic-facing; sequence MASG. Residues 5–25 form a helical membrane-spanning segment; the sequence is WFYLSCMVLGSLGSMCILFTA. A Cytochrome b561 domain is found at 12 to 219; it reads VLGSLGSMCI…FGLLVLYVLL (208 aa). Residues 26–40 are Lumenal-facing; the sequence is YWMQYWRGGFAWDGT. A helical membrane pass occupies residues 41–61; it reads VLMFNWHPVLMVAGMVVLYGA. His-47 and Arg-67 together coordinate heme b. The Cytoplasmic segment spans residues 62–81; sequence ASLVYRLPSSWVGPRLPWKV. Residues Arg-76 and Lys-80 each coordinate L-ascorbate. The helical transmembrane segment at 82–102 threads the bilayer; sequence LHAALHLLAFTCTVVGLIAVF. Heme b contacts are provided by residues His-83, 112 to 115, and His-117; that span reads HLYS. Residues 103 to 119 are Lumenal-facing; it reads RFHNHSRIAHLYSLHSW. Residues 120-140 traverse the membrane as a helical segment; the sequence is LGITTVVLFACQWFLGFAVFL. Residues 141-154 are Cytoplasmic-facing; sequence LPWASQWLRSLLKP. Arg-149 serves as a coordination point for L-ascorbate. A helical transmembrane segment spans residues 155–175; it reads LHVFFGACILSLSITSVISGI. Positions 156 and 177 each coordinate heme b. The Lumenal portion of the chain corresponds to 176–202; the sequence is NEKLFFVLKNATKPYSSLPGEAVFANS. Residues 203 to 223 traverse the membrane as a helical segment; it reads TGLLVVAFGLLVLYVLLASSW. Lys-224 provides a ligand contact to heme b. Topologically, residues 224–242 are cytoplasmic; sequence KRPDPGALTDRQPLLHDRE.

Homodimer. The cofactor is heme b. Post-translationally, N-glycosylated. As to expression, present in lung, spleen, thymus and testis. Present at low level in brain, heart, liver and kidney. Expressed in the alveolar macrophages of the lung, in the white pulp of the spleen, widespread in the thymus, and in the Sertoli cells of the testis (at protein level).

The protein resides in the late endosome membrane. It localises to the lysosome membrane. It carries out the reaction Fe(3+)(out) + L-ascorbate(in) = monodehydro-L-ascorbate radical(in) + Fe(2+)(out) + H(+). Transmembrane reductase that uses ascorbate as an electron donor in the cytoplasm and transfers electrons across membranes to reduce iron cations Fe(3+) into Fe(2+) in the lumen of the late endosome and lysosome. Reduced iron can then be extruded from the late endosome and lysosome to the cytoplasm by divalent metal-specific transporters. It is therefore most probably involved in endosomal and lysosomal cellular iron homeostasis. The chain is Lysosomal membrane ascorbate-dependent ferrireductase CYB561A3 from Mus musculus (Mouse).